The chain runs to 290 residues: 4-hydroxybenzoate octaprenyltransferase (290 aa).

6 helical membrane passes run 38–58 (LAGMAIPALGTLTVFILGVFF), 99–119 (LFGALVGISFALVLTLNSMTI), 141–161 (LPQLVLGAAFGWSIPMVFTAV), 213–233 (LIIGLLQLATLLLLGVIGWQL), 238–258 (IYYLALAGAAGLFLWQQKLIV), and 268–288 (AFLNNNLVGMLIFVGILLSLL).

The protein belongs to the UbiA prenyltransferase family. It depends on Mg(2+) as a cofactor.

Its subcellular location is the cell inner membrane. The catalysed reaction is all-trans-octaprenyl diphosphate + 4-hydroxybenzoate = 4-hydroxy-3-(all-trans-octaprenyl)benzoate + diphosphate. It functions in the pathway cofactor biosynthesis; ubiquinone biosynthesis. Its function is as follows. Catalyzes the prenylation of para-hydroxybenzoate (PHB) with an all-trans polyprenyl group. Mediates the second step in the final reaction sequence of ubiquinone-8 (UQ-8) biosynthesis, which is the condensation of the polyisoprenoid side chain with PHB, generating the first membrane-bound Q intermediate 3-octaprenyl-4-hydroxybenzoate. This chain is 4-hydroxybenzoate octaprenyltransferase, found in Sodalis glossinidius (strain morsitans).